We begin with the raw amino-acid sequence, 95 residues long: Histone-like DNA-binding protein (95 aa).

It belongs to the bacterial histone-like protein family.

In Rickettsia conorii (strain ATCC VR-613 / Malish 7), this protein is Histone-like DNA-binding protein.